We begin with the raw amino-acid sequence, 329 residues long: Olfactory receptor 5AL1 (329 aa).

Residues 1-44 are Extracellular-facing; the sequence is MCALKGFLEENFYTYSVAKGNHSTVYEFILLGLTDNAELQVTLF. N21 is a glycosylation site (N-linked (GlcNAc...) asparagine). Residues 45 to 65 form a helical membrane-spanning segment; it reads GIFLVVYLASFMGNFGLIMLI. At 66–73 the chain is on the cytoplasmic side; sequence QISPQLHT. The helical transmembrane segment at 74–94 threads the bilayer; it reads PMYFFLSHLAFVDFSFTSSVA. Residues 95–113 are Extracellular-facing; sequence PNTLVNFLCEVKSITFYAC. C113 and C205 are disulfide-bonded. Residues 114–134 form a helical membrane-spanning segment; it reads AIQVCCFITFVVCELYLLSIM. The Cytoplasmic segment spans residues 135–157; the sequence is AYDRYVAICNPLLYVILIPRKLC. The chain crosses the membrane as a helical span at residues 158–178; it reads IKLIASTYVYGFTVGLVQTVA. Over 179-220 the chain is Extracellular; sequence TSYLSFCDSNVINHFYHDDVPLVALACSDTHVKELMLLIIAG. The helical transmembrane segment at 221 to 241 threads the bilayer; that stretch reads FNTLCSLVIVLISYGFIFFAI. The Cytoplasmic portion of the chain corresponds to 242–253; it reads LRIHSAEGRQKA. The helical transmembrane segment at 254–274 threads the bilayer; sequence FSTSASHLTSITIFYGTIIFM. Over 275-287 the chain is Extracellular; that stretch reads YPQPKSSHSLNMD. The helical transmembrane segment at 288-308 threads the bilayer; that stretch reads KVASVFNVVVIPTLNPLIYSL. At 309-329 the chain is on the cytoplasmic side; sequence RNQEVKNALKRIIEKLCLAVK.

Belongs to the G-protein coupled receptor 1 family.

The protein resides in the cell membrane. Its function is as follows. Odorant receptor. The chain is Olfactory receptor 5AL1 (OR5AL1) from Homo sapiens (Human).